The primary structure comprises 445 residues: Phosphoglucosamine mutase (445 aa).

Ser-102 acts as the Phosphoserine intermediate in catalysis. Mg(2+)-binding residues include Ser-102, Asp-241, Asp-243, and Asp-245. Residue Ser-102 is modified to Phosphoserine.

Belongs to the phosphohexose mutase family. Mg(2+) serves as cofactor. In terms of processing, activated by phosphorylation.

It catalyses the reaction alpha-D-glucosamine 1-phosphate = D-glucosamine 6-phosphate. Catalyzes the conversion of glucosamine-6-phosphate to glucosamine-1-phosphate. In Shewanella baltica (strain OS155 / ATCC BAA-1091), this protein is Phosphoglucosamine mutase.